The chain runs to 324 residues: Probable UDP-sugar transporter protein SLC35A4 (324 aa).

At 1–18 (MSVEDGGVPGLARPRQAR) the chain is on the cytoplasmic side. A helical transmembrane segment spans residues 19 to 39 (WTLLLFLSTAMYGAHAPFLAL). Over 40-52 (CHVDGRVPFRPSS) the chain is Lumenal. Residues 53-73 (AVLLTELTKLLLCAFSLLVGW) traverse the membrane as a helical segment. The Cytoplasmic portion of the chain corresponds to 74-85 (QTWPQGTPPWRQ). Residues 86–106 (AVPFALSALLYGANNNLVIYL) traverse the membrane as a helical segment. Residues 107 to 142 (QRYMDPSTYQVLSNLKIGSTALLYCLCLGHRLSARQ) lie on the Lumenal side of the membrane. The chain crosses the membrane as a helical span at residues 143–163 (GLALLLLMAAGACYASGGFQE). The Cytoplasmic portion of the chain corresponds to 164-180 (PVNTLPGPASAAGAHPM). A helical transmembrane segment spans residues 181-201 (PLHITPLGLLLLILYCLISGL). At 202–214 (SSVYTELIMKRQR) the chain is on the lumenal side. The helical transmembrane segment at 215 to 235 (LPLALQNLFLYTFGVILNFGL) threads the bilayer. Over 236–248 (YAGSGPGPGFLEG) the chain is Cytoplasmic. Residues 249–271 (FSGWAVLVVLNQAVNGLLMSAVM) form a helical membrane-spanning segment. Over 272–279 (KHGSSITR) the chain is Lumenal. A helical membrane pass occupies residues 280–300 (LFIVSCSLVVNAVLSAVLLQL). The Cytoplasmic segment spans residues 301–324 (QLTAIFFLAALLIGLAVCLYYGSP).

The protein belongs to the nucleotide-sugar transporter family. SLC35A subfamily. Found in a complex with SLC35A2 and SLC35A3.

It is found in the golgi apparatus membrane. It catalyses the reaction CDP-L-ribitol(in) + CDP(out) = CDP-L-ribitol(out) + CDP(in). Mediates the transport of CDP-ribitol. Does not exhibit CMP-sialic acid, UDP-galactose and UDP-N-acetylglucosamine transport activity. This chain is Probable UDP-sugar transporter protein SLC35A4, found in Mus musculus (Mouse).